A 573-amino-acid chain; its full sequence is 60 kDa heat shock protein, mitochondrial (573 aa).

The transit peptide at Met1 to Tyr26 directs the protein to the mitochondrion. Residues Lys75 and Asp111–Thr115 each bind ATP. Tyr227 carries the phosphotyrosine modification. Residues Gly440 and Asp520 each coordinate ATP.

It is found in the mitochondrion matrix. The catalysed reaction is ATP + H2O + a folded polypeptide = ADP + phosphate + an unfolded polypeptide.. In terms of biological role, chaperonin implicated in mitochondrial protein import and macromolecular assembly. Together with Hsp10, facilitates the correct folding of imported proteins. May also prevent misfolding and promote the refolding and proper assembly of unfolded polypeptides generated under stress conditions in the mitochondrial matrix. The functional units of these chaperonins consist of heptameric rings of the large subunit Hsp60, which function as a back-to-back double ring. In a cyclic reaction, Hsp60 ring complexes bind one unfolded substrate protein per ring, followed by the binding of ATP and association with 2 heptameric rings of the co-chaperonin Hsp10. This leads to sequestration of the substrate protein in the inner cavity of Hsp60 where, for a certain period of time, it can fold undisturbed by other cell components. Synchronous hydrolysis of ATP in all Hsp60 subunits results in the dissociation of the chaperonin rings and the release of ADP and the folded substrate protein. The protein is 60 kDa heat shock protein, mitochondrial of Gallus gallus (Chicken).